The primary structure comprises 330 residues: GTPase Obg (330 aa).

The 159-residue stretch at methionine 1–leucine 159 folds into the Obg domain. Residues serine 160 to lysine 327 form the OBG-type G domain. Residues glycine 166 to serine 173, phenylalanine 191 to valine 195, aspartate 212 to glycine 215, asparagine 279 to aspartate 282, and serine 308 to tyrosine 310 each bind GTP. Residues serine 173 and threonine 193 each contribute to the Mg(2+) site.

It belongs to the TRAFAC class OBG-HflX-like GTPase superfamily. OBG GTPase family. As to quaternary structure, monomer. The cofactor is Mg(2+).

The protein resides in the cytoplasm. An essential GTPase which binds GTP, GDP and possibly (p)ppGpp with moderate affinity, with high nucleotide exchange rates and a fairly low GTP hydrolysis rate. Plays a role in control of the cell cycle, stress response, ribosome biogenesis and in those bacteria that undergo differentiation, in morphogenesis control. In Rickettsia typhi (strain ATCC VR-144 / Wilmington), this protein is GTPase Obg.